The primary structure comprises 223 residues: Methanol utilization control regulatory protein MoxX (223 aa).

Positions 16-133 constitute a Response regulatory domain; that stretch reads QILIVDDHPV…EICAAFTEVA (118 aa). Residues 155-220 form the HTH luxR-type domain; that stretch reads PGTSAPRLTG…DLVVKGIRYF (66 aa). Residues 179–198 constitute a DNA-binding region (H-T-H motif); sequence YRDIADRACISYKTVSNVSL.

Phosphorylated by MoxY.

Its subcellular location is the cytoplasm. Its function is as follows. Member of the two-component regulatory system MoxY/MoxX probably involved in the regulation of the methanol dehydrogenase expression. This is Methanol utilization control regulatory protein MoxX (moxX) from Paracoccus denitrificans.